The sequence spans 340 residues: 4-hydroxythreonine-4-phosphate dehydrogenase (340 aa).

Residues histidine 141 and threonine 142 each coordinate substrate. The a divalent metal cation site is built by histidine 171, histidine 216, and histidine 271. Substrate-binding residues include lysine 279, asparagine 288, and arginine 297.

The protein belongs to the PdxA family. Homodimer. Zn(2+) serves as cofactor. Mg(2+) is required as a cofactor. It depends on Co(2+) as a cofactor.

Its subcellular location is the cytoplasm. It carries out the reaction 4-(phosphooxy)-L-threonine + NAD(+) = 3-amino-2-oxopropyl phosphate + CO2 + NADH. It functions in the pathway cofactor biosynthesis; pyridoxine 5'-phosphate biosynthesis; pyridoxine 5'-phosphate from D-erythrose 4-phosphate: step 4/5. Catalyzes the NAD(P)-dependent oxidation of 4-(phosphooxy)-L-threonine (HTP) into 2-amino-3-oxo-4-(phosphooxy)butyric acid which spontaneously decarboxylates to form 3-amino-2-oxopropyl phosphate (AHAP). This Desulforapulum autotrophicum (strain ATCC 43914 / DSM 3382 / VKM B-1955 / HRM2) (Desulfobacterium autotrophicum) protein is 4-hydroxythreonine-4-phosphate dehydrogenase.